A 489-amino-acid chain; its full sequence is Phenylalanine--tRNA ligase alpha subunit (489 aa).

L-phenylalanine-binding positions include threonine 316, 355 to 357, phenylalanine 395, and phenylalanine 420; that span reads QLD.

It belongs to the class-II aminoacyl-tRNA synthetase family. Phe-tRNA synthetase alpha subunit type 2 subfamily. Tetramer of two alpha and two beta subunits. It depends on Mg(2+) as a cofactor.

The protein localises to the cytoplasm. The catalysed reaction is tRNA(Phe) + L-phenylalanine + ATP = L-phenylalanyl-tRNA(Phe) + AMP + diphosphate + H(+). In Pyrobaculum aerophilum (strain ATCC 51768 / DSM 7523 / JCM 9630 / CIP 104966 / NBRC 100827 / IM2), this protein is Phenylalanine--tRNA ligase alpha subunit.